The primary structure comprises 546 residues: Probable protein kinase UbiB (546 aa).

The Protein kinase domain occupies 124-502 (DFSVEPLASA…HVRQGQSRYL (379 aa)). Residues 130 to 138 (LASASIAQV) and Lys153 each bind ATP. The active-site Proton acceptor is the Asp288. Helical transmembrane passes span 501–521 (YLFGIGAVLLLSGTLLFIHRP) and 522–542 (EWGMMPGWLMAGGVVTWLIGW).

The protein belongs to the ABC1 family. UbiB subfamily.

The protein resides in the cell inner membrane. It functions in the pathway cofactor biosynthesis; ubiquinone biosynthesis [regulation]. Is probably a protein kinase regulator of UbiI activity which is involved in aerobic coenzyme Q (ubiquinone) biosynthesis. The protein is Probable protein kinase UbiB of Klebsiella pneumoniae subsp. pneumoniae (strain ATCC 700721 / MGH 78578).